Reading from the N-terminus, the 197-residue chain is uncharacterized protein (197 aa).

The disordered stretch occupies residues 1–31; it reads MMHFRKKSSISNTSDHDGANRASDVKISEDD. Phosphoserine occurs at positions 11 and 23. Residues 14–31 are compositionally biased toward basic and acidic residues; it reads SDHDGANRASDVKISEDD. Residues lysine 26 and lysine 32 each participate in a glycyl lysine isopeptide (Lys-Gly) (interchain with G-Cter in ubiquitin) cross-link. The segment at 157–197 is disordered; the sequence is VGGASSQMYGEQAVYQPQQHVQTEEKQKKKKKGLFGRMKKK. Positions 158–177 are enriched in polar residues; sequence GGASSQMYGEQAVYQPQQHV. Over residues 184–197 the composition is skewed to basic residues; the sequence is KKKKKGLFGRMKKK.

It to yeast YGR273c.

This is an uncharacterized protein from Saccharomyces cerevisiae (strain ATCC 204508 / S288c) (Baker's yeast).